The primary structure comprises 96 residues: MNIRPLHDRVIVKRSEVESKSAGGIVLTGSAAEQSSRGEVLAVGNGRILENGSVMALDVKVGDIVIFNEGYGVKKEKIDGEEVLILSESDLMAVVG.

Belongs to the GroES chaperonin family. As to quaternary structure, heptamer of 7 subunits arranged in a ring. Interacts with the chaperonin GroEL.

It is found in the cytoplasm. Its function is as follows. Together with the chaperonin GroEL, plays an essential role in assisting protein folding. The GroEL-GroES system forms a nano-cage that allows encapsulation of the non-native substrate proteins and provides a physical environment optimized to promote and accelerate protein folding. GroES binds to the apical surface of the GroEL ring, thereby capping the opening of the GroEL channel. This Shewanella piezotolerans (strain WP3 / JCM 13877) protein is Co-chaperonin GroES.